Here is a 397-residue protein sequence, read N- to C-terminus: Nuclear RNA export factor 5 (397 aa).

Residues 13–92 (WFKVTIPYGI…IFVSHFTAPY (80 aa)) form the RRM domain. LRR repeat units follow at residues 160 to 185 (ELLS…EKAP), 186 to 209 (KVKT…VKGL), 210 to 237 (KLEE…AIRD), and 238 to 265 (CFPK…ETMK). The region spanning 280 to 367 (LVLQFLQQSN…ESQRWWCLLS (88 aa)) is the NTF2; truncated domain.

It belongs to the NXF family. As to quaternary structure, interacts with NXT1 and NXT2.

The protein resides in the cytoplasm. It localises to the nucleus. Its function is as follows. Could be involved in the export of mRNA from the nucleus to the cytoplasm. Could also have a role in polarized cytoplasmic transport and localization of mRNA in neurons. The protein is Nuclear RNA export factor 5 (NXF5) of Homo sapiens (Human).